Reading from the N-terminus, the 459-residue chain is Zinc finger protein ZFP2 (459 aa).

C2H2-type zinc fingers lie at residues 100–122 (YGCD…QRIH), 128–150 (YTCN…QRTH), 156–178 (YKCH…QRTH), 184–206 (YQCK…ERIH), 212–234 (YKCH…QRTH), 240–262 (YECN…QRSH), 268–290 (YECS…QRNH), 296–318 (YKCN…QRLH), 324–346 (FECN…RRIH), 352–374 (YECM…QVIH), 380–402 (YECT…QRIH), 408–430 (YECD…QRIH), and 436–458 (YQCN…QRTH).

The protein belongs to the krueppel C2H2-type zinc-finger protein family.

The protein localises to the nucleus. In terms of biological role, probable transcription factor involved in neuronal differentiation and/or phenotypic maintenance. This Mus musculus (Mouse) protein is Zinc finger protein ZFP2 (Zfp2).